The following is a 131-amino-acid chain: UPF0342 protein DSY1594 (131 aa).

The protein belongs to the UPF0342 family.

In Desulfitobacterium hafniense (strain Y51), this protein is UPF0342 protein DSY1594.